A 172-amino-acid polypeptide reads, in one-letter code: Shikimate kinase (172 aa).

11–16 provides a ligand contact to ATP; it reads GSGKTT. Thr-15 contributes to the Mg(2+) binding site. Residues Asp-33, Arg-57, and Gly-79 each contribute to the substrate site. Arg-117 is an ATP binding site. Residue Arg-136 coordinates substrate.

It belongs to the shikimate kinase family. Monomer. Mg(2+) serves as cofactor.

It is found in the cytoplasm. It catalyses the reaction shikimate + ATP = 3-phosphoshikimate + ADP + H(+). The protein operates within metabolic intermediate biosynthesis; chorismate biosynthesis; chorismate from D-erythrose 4-phosphate and phosphoenolpyruvate: step 5/7. Its function is as follows. Catalyzes the specific phosphorylation of the 3-hydroxyl group of shikimic acid using ATP as a cosubstrate. This Caldicellulosiruptor bescii (strain ATCC BAA-1888 / DSM 6725 / KCTC 15123 / Z-1320) (Anaerocellum thermophilum) protein is Shikimate kinase.